A 224-amino-acid chain; its full sequence is Phosphoglycolate phosphatase (224 aa).

The active-site Nucleophile is the Asp10. Positions 10, 12, and 176 each coordinate Mg(2+).

This sequence belongs to the HAD-like hydrolase superfamily. CbbY/CbbZ/Gph/YieH family. Mg(2+) serves as cofactor.

It catalyses the reaction 2-phosphoglycolate + H2O = glycolate + phosphate. It participates in organic acid metabolism; glycolate biosynthesis; glycolate from 2-phosphoglycolate: step 1/1. In terms of biological role, specifically catalyzes the dephosphorylation of 2-phosphoglycolate. Is involved in the dissimilation of the intracellular 2-phosphoglycolate formed during the DNA repair of 3'-phosphoglycolate ends, a major class of DNA lesions induced by oxidative stress. The polypeptide is Phosphoglycolate phosphatase (Pasteurella multocida (strain Pm70)).